We begin with the raw amino-acid sequence, 357 residues long: Aurora kinase A- and ninein-interacting protein (357 aa).

The segment covering 71-91 (LQPGKTNGSDQKSVSSHTESQ) has biased composition (polar residues). The tract at residues 71–98 (LQPGKTNGSDQKSVSSHTESQINKESKK) is disordered. An interaction with AURKA region spans residues 187–357 (RKEEKGDSAR…EGNQVIRHQF (171 aa)). 2 positions are modified to phosphoserine: Ser267 and Ser292. Positions 281–357 (KDSWSQLFTE…EGNQVIRHQF (77 aa)) are interaction with RBBP8/CtIP.

Belongs to the AUNIP family. As to quaternary structure, interacts (via C-terminus) with AURKA (via C-terminus). Interacts (via N-terminus) with NIN; this interaction blocks NIN phosphorylation by both AURKA and GSK3B. Identified in a complex with NIN and AURKA. Interacts with RBBP8/CtIP. In terms of tissue distribution, expressed in heart, skeletal muscles, placenta and testis.

It localises to the nucleus. Its subcellular location is the chromosome. The protein localises to the cytoplasm. It is found in the cytoskeleton. The protein resides in the microtubule organizing center. It localises to the centrosome. Its subcellular location is the spindle pole. Functionally, DNA-binding protein that accumulates at DNA double-strand breaks (DSBs) following DNA damage and promotes DNA resection and homologous recombination. Serves as a sensor of DNA damage: binds DNA with a strong preference for DNA substrates that mimic structures generated at stalled replication forks, and anchors RBBP8/CtIP to DSB sites to promote DNA end resection and ensuing homologous recombination repair. Inhibits non-homologous end joining (NHEJ). Required for the dynamic movement of AURKA at the centrosomes and spindle apparatus during the cell cycle. The protein is Aurora kinase A- and ninein-interacting protein of Homo sapiens (Human).